The following is a 101-amino-acid chain: Small ribosomal subunit protein uS14 (101 aa).

It belongs to the universal ribosomal protein uS14 family. As to quaternary structure, part of the 30S ribosomal subunit. Contacts proteins S3 and S10.

Binds 16S rRNA, required for the assembly of 30S particles and may also be responsible for determining the conformation of the 16S rRNA at the A site. This is Small ribosomal subunit protein uS14 from Pseudomonas putida (strain ATCC 47054 / DSM 6125 / CFBP 8728 / NCIMB 11950 / KT2440).